A 351-amino-acid chain; its full sequence is Phosphoribosylformylglycinamidine cyclo-ligase (351 aa).

It belongs to the AIR synthase family.

It is found in the cytoplasm. The enzyme catalyses 2-formamido-N(1)-(5-O-phospho-beta-D-ribosyl)acetamidine + ATP = 5-amino-1-(5-phospho-beta-D-ribosyl)imidazole + ADP + phosphate + H(+). Its pathway is purine metabolism; IMP biosynthesis via de novo pathway; 5-amino-1-(5-phospho-D-ribosyl)imidazole from N(2)-formyl-N(1)-(5-phospho-D-ribosyl)glycinamide: step 2/2. This is Phosphoribosylformylglycinamidine cyclo-ligase from Burkholderia pseudomallei (strain 1710b).